The chain runs to 607 residues: Kelch repeat and BTB domain-containing protein 3 (607 aa).

The BTB domain maps to 48–115 (YDFKIIMKEE…AYTGKTRITD (68 aa)). In terms of domain architecture, BACK spans 150–250 (CLHLLSLSDS…QLSEDTLQDY (101 aa)). Kelch repeat units follow at residues 291–337 (KYIF…SSYG), 339–390 (KIFL…TPRT), 400–450 (RLFV…ACQN), 452–502 (IYVL…KAVP), and 548–595 (KIYI…VIQF).

This chain is Kelch repeat and BTB domain-containing protein 3, found in Mus musculus (Mouse).